The sequence spans 432 residues: Enolase (432 aa).

Gln167 is a (2R)-2-phosphoglycerate binding site. Glu209 functions as the Proton donor in the catalytic mechanism. Residues Asp246, Glu291, and Asp318 each coordinate Mg(2+). (2R)-2-phosphoglycerate is bound by residues Lys343, Arg372, Ser373, and Lys394. The active-site Proton acceptor is the Lys343.

Belongs to the enolase family. As to quaternary structure, component of the RNA degradosome, a multiprotein complex involved in RNA processing and mRNA degradation. It depends on Mg(2+) as a cofactor.

The protein resides in the cytoplasm. The protein localises to the secreted. Its subcellular location is the cell surface. It catalyses the reaction (2R)-2-phosphoglycerate = phosphoenolpyruvate + H2O. It participates in carbohydrate degradation; glycolysis; pyruvate from D-glyceraldehyde 3-phosphate: step 4/5. Catalyzes the reversible conversion of 2-phosphoglycerate (2-PG) into phosphoenolpyruvate (PEP). It is essential for the degradation of carbohydrates via glycolysis. The polypeptide is Enolase (Aliivibrio salmonicida (strain LFI1238) (Vibrio salmonicida (strain LFI1238))).